The primary structure comprises 691 residues: DNA ligase (691 aa).

NAD(+) contacts are provided by residues 41-45, 90-91, and Glu-130; these read DAEYD and SL. The active-site N6-AMP-lysine intermediate is the Lys-132. NAD(+)-binding residues include Arg-153, Glu-190, Lys-307, and Lys-331. Zn(2+) contacts are provided by Cys-425, Cys-428, Cys-443, and Cys-449. Residues 610 to 691 enclose the BRCT domain; it reads APQGVLAGKT…LHQLLEGNTP (82 aa).

The protein belongs to the NAD-dependent DNA ligase family. LigA subfamily. It depends on Mg(2+) as a cofactor. Mn(2+) is required as a cofactor.

The enzyme catalyses NAD(+) + (deoxyribonucleotide)n-3'-hydroxyl + 5'-phospho-(deoxyribonucleotide)m = (deoxyribonucleotide)n+m + AMP + beta-nicotinamide D-nucleotide.. DNA ligase that catalyzes the formation of phosphodiester linkages between 5'-phosphoryl and 3'-hydroxyl groups in double-stranded DNA using NAD as a coenzyme and as the energy source for the reaction. It is essential for DNA replication and repair of damaged DNA. The chain is DNA ligase from Burkholderia ambifaria (strain MC40-6).